A 407-amino-acid chain; its full sequence is D-3-phosphoglycerate dehydrogenase (407 aa).

Residues 161 to 162 (HI), Asp181, 238 to 240 (ASR), and Asp264 each bind NAD(+). Arg240 is an active-site residue. Glu269 is an active-site residue. Catalysis depends on His292, which acts as the Proton donor. 292–295 (HIGG) lines the NAD(+) pocket. Residues 340–407 (RILNIHNNKP…PNSIKTRVLY (68 aa)) form the ACT domain.

It belongs to the D-isomer specific 2-hydroxyacid dehydrogenase family.

It carries out the reaction (2R)-3-phosphoglycerate + NAD(+) = 3-phosphooxypyruvate + NADH + H(+). The enzyme catalyses (R)-2-hydroxyglutarate + NAD(+) = 2-oxoglutarate + NADH + H(+). It functions in the pathway amino-acid biosynthesis; L-serine biosynthesis; L-serine from 3-phospho-D-glycerate: step 1/3. Catalyzes the reversible oxidation of 3-phospho-D-glycerate to 3-phosphonooxypyruvate, the first step of the phosphorylated L-serine biosynthesis pathway. Also catalyzes the reversible oxidation of 2-hydroxyglutarate to 2-oxoglutarate. The polypeptide is D-3-phosphoglycerate dehydrogenase (serA) (Dictyostelium discoideum (Social amoeba)).